We begin with the raw amino-acid sequence, 392 residues long: 8-amino-7-oxononanoate synthase (392 aa).

Residue Arg21 participates in substrate binding. Position 114 to 115 (Gly114 to Tyr115) interacts with pyridoxal 5'-phosphate. Substrate is bound at residue His139. Residues Ser187, Asp212–His215, and Thr243–Lys246 contribute to the pyridoxal 5'-phosphate site. The residue at position 246 (Lys246) is an N6-(pyridoxal phosphate)lysine. Substrate is bound at residue Thr359.

The protein belongs to the class-II pyridoxal-phosphate-dependent aminotransferase family. BioF subfamily. In terms of assembly, homodimer. The cofactor is pyridoxal 5'-phosphate.

It carries out the reaction 6-carboxyhexanoyl-[ACP] + L-alanine + H(+) = (8S)-8-amino-7-oxononanoate + holo-[ACP] + CO2. It participates in cofactor biosynthesis; biotin biosynthesis. Functionally, catalyzes the decarboxylative condensation of pimeloyl-[acyl-carrier protein] and L-alanine to produce 8-amino-7-oxononanoate (AON), [acyl-carrier protein], and carbon dioxide. This is 8-amino-7-oxononanoate synthase from Chlorobaculum parvum (strain DSM 263 / NCIMB 8327) (Chlorobium vibrioforme subsp. thiosulfatophilum).